A 1300-amino-acid polypeptide reads, in one-letter code: Phospholipid-transporting ATPase IK (1300 aa).

Over residues 1–11 (MGTGPAQTPRS) the composition is skewed to polar residues. Residues 1 to 98 (MGTGPAQTPR…SLGQREDLQD (98 aa)) form a disordered region. At 1-149 (MGTGPAQTPR…TAKYNFYSFL (149 aa)) the chain is on the cytoplasmic side. The span at 65–74 (RRHKAQPGRA) shows a compositional bias: basic residues. Residues 150-171 (PLNLYEQFHRVSNLFFLIIIIL) traverse the membrane as a helical segment. The Exoplasmic loop portion of the chain corresponds to 172-177 (QSIPDI). The helical transmembrane segment at 178–197 (STLPWFSLSTPMVCLLFIRA) threads the bilayer. Residues 198–381 (TRDLVDDMGR…TKLDLLMNKL (184 aa)) are Cytoplasmic-facing. Residues 382 to 403 (VVVIFISVVLVCLVLAFGFGFS) traverse the membrane as a helical segment. Topologically, residues 404–430 (VKEFKDHHYYLSGVHGSSVAAESFFVF) are exoplasmic loop. Residues 431–452 (WSFLILLSVTIPMSMFILSEFI) form a helical membrane-spanning segment. Over 453-995 (YLGNSVFIDW…GRWSYVRICK (543 aa)) the chain is Cytoplasmic. Residue aspartate 495 is the 4-aspartylphosphate intermediate of the active site. ATP is bound by residues aspartate 495, lysine 496, threonine 497, glutamate 596, phenylalanine 637, lysine 660, arginine 693, threonine 763, glycine 764, aspartate 765, arginine 913, and lysine 919. Aspartate 495 contacts Mg(2+). Position 497 (threonine 497) interacts with Mg(2+). Aspartate 939 contributes to the Mg(2+) binding site. 2 residues coordinate ATP: asparagine 942 and aspartate 943. Aspartate 943 provides a ligand contact to Mg(2+). A helical membrane pass occupies residues 996–1016 (FLRYFFYKSMASMMVQVWFAC). At 1017-1028 (YNGFTGQPLYEG) the chain is on the exoplasmic loop side. A helical membrane pass occupies residues 1029–1048 (WFLALFNLLYSTLPVLYIGL). Residues 1049–1078 (FEQDVSAEQSLEKPELYVVGQKDELFNYWV) are Cytoplasmic-facing. Residues 1079–1100 (FVQAIAHGVTTSLVNFFMTLWI) form a helical membrane-spanning segment. At 1101 to 1112 (SRDTAGPASFSD) the chain is on the exoplasmic loop side. Residues 1113–1135 (HQSFAVVVALSCLLSITMEVILI) traverse the membrane as a helical segment. Residues 1136–1141 (IKYWTA) are Cytoplasmic-facing. Residues 1142-1162 (LCVATILLSLGFYAIMTTTTQ) form a helical membrane-spanning segment. The Exoplasmic loop segment spans residues 1163-1182 (SFWLFRVSPTTFPFLYADLS). The helical transmembrane segment at 1183–1207 (VMSSPSILLVVLLSVSINTFPVLAL) threads the bilayer. Topologically, residues 1208-1300 (RVIFPALKEL…EAASSPKESQ (93 aa)) are cytoplasmic. Residues 1272 to 1300 (RGPGVSSDIASESLDPSDEEAASSPKESQ) form a disordered region.

It belongs to the cation transport ATPase (P-type) (TC 3.A.3) family. Type IV subfamily. Mg(2+) serves as cofactor. Isoform 3 was only detected in testis.

The protein resides in the cytoplasmic vesicle. It is found in the secretory vesicle. It localises to the acrosome membrane. Its subcellular location is the endoplasmic reticulum membrane. It carries out the reaction ATP + H2O + phospholipidSide 1 = ADP + phosphate + phospholipidSide 2.. It catalyses the reaction a 1,2-diacyl-sn-glycero-3-phospho-L-serine(out) + ATP + H2O = a 1,2-diacyl-sn-glycero-3-phospho-L-serine(in) + ADP + phosphate + H(+). Functionally, P4-ATPase flippase which catalyzes the hydrolysis of ATP coupled to the transport of aminophospholipids from the outer to the inner leaflet of various membranes and ensures the maintenance of asymmetric distribution of phospholipids. Phospholipid translocation also seems to be implicated in vesicle formation and in uptake of lipid signaling molecules. May be responsible for the maintenance of asymmetric distribution of phosphatidylserine (PS) in spermatozoa membranes. Involved in acrosome reactions and binding of spermatozoa to zona pellucida. The chain is Phospholipid-transporting ATPase IK from Homo sapiens (Human).